The sequence spans 88 residues: Large ribosomal subunit protein bL27 (88 aa).

Over residues 1 to 13 the composition is skewed to polar residues; the sequence is MATKKGASSSSNG. Positions 1 to 25 are disordered; it reads MATKKGASSSSNGRDSEAKRLGVKR.

Belongs to the bacterial ribosomal protein bL27 family.

This chain is Large ribosomal subunit protein bL27, found in Corynebacterium efficiens (strain DSM 44549 / YS-314 / AJ 12310 / JCM 11189 / NBRC 100395).